A 426-amino-acid polypeptide reads, in one-letter code: Elongation factor 1-alpha (426 aa).

The 217-residue stretch at 5 to 221 folds into the tr-type G domain; the sequence is KPHINLAVIG…NALKEPEKPT (217 aa). The G1 stretch occupies residues 14–21; that stretch reads GHIDHGKS. GTP is bound at residue 14-21; it reads GHIDHGKS. S21 lines the Mg(2+) pocket. The interval 70 to 74 is G2; it reads GITID. The tract at residues 91–94 is G3; the sequence is DCPG. Residues 91 to 95 and 146 to 149 contribute to the GTP site; these read DCPGH and NKMD. The interval 146-149 is G4; the sequence is NKMD. Residues 185–187 form a G5 region; sequence SAF.

This sequence belongs to the TRAFAC class translation factor GTPase superfamily. Classic translation factor GTPase family. EF-Tu/EF-1A subfamily.

It is found in the cytoplasm. The enzyme catalyses GTP + H2O = GDP + phosphate + H(+). GTP hydrolase that promotes the GTP-dependent binding of aminoacyl-tRNA to the A-site of ribosomes during protein biosynthesis. This Methanocella arvoryzae (strain DSM 22066 / NBRC 105507 / MRE50) protein is Elongation factor 1-alpha.